The sequence spans 130 residues: Small ribosomal subunit protein uS9 (130 aa).

Belongs to the universal ribosomal protein uS9 family.

This chain is Small ribosomal subunit protein uS9, found in Thiobacillus denitrificans (strain ATCC 25259 / T1).